The chain runs to 171 residues: Adenine phosphoribosyltransferase (171 aa).

It belongs to the purine/pyrimidine phosphoribosyltransferase family. Homodimer.

It is found in the cytoplasm. The catalysed reaction is AMP + diphosphate = 5-phospho-alpha-D-ribose 1-diphosphate + adenine. It functions in the pathway purine metabolism; AMP biosynthesis via salvage pathway; AMP from adenine: step 1/1. Catalyzes a salvage reaction resulting in the formation of AMP, that is energically less costly than de novo synthesis. The protein is Adenine phosphoribosyltransferase of Natranaerobius thermophilus (strain ATCC BAA-1301 / DSM 18059 / JW/NM-WN-LF).